The primary structure comprises 62 residues: Large ribosomal subunit protein bL28 (62 aa).

It belongs to the bacterial ribosomal protein bL28 family.

The protein is Large ribosomal subunit protein bL28 of Carboxydothermus hydrogenoformans (strain ATCC BAA-161 / DSM 6008 / Z-2901).